The sequence spans 678 residues: Chloride channel protein ClC-Kb (678 aa).

Residues 1 to 50 are Cytoplasmic-facing; it reads MEELVGLREGSSGNPVALRELWSPCPRLRRGIRGGLEWLKQKLFRVGEDW. The next 2 membrane-spanning stretches (helical) occupy residues 51-82 and 91-111; these read YFLM…KWLY and LRYL…SGFS. The helical intramembrane region spans 116–127; that stretch reads PFSGGSGIPELK. Ser121 is a binding site for chloride. Helical transmembrane passes span 141–160 and 161–180; these read IKNF…TGST and LFLG…AAYL. The segment at residues 203–224 is an intramembrane region (helical); it reads AGAAVGVATVFAAPFSGVLFCI. The helical transmembrane segment at 236–255 threads the bilayer; the sequence is YWRGFFAATCGAFMFRLLAV. 4 residues coordinate Ca(2+): Glu259, Glu261, Asp278, and Glu281. 2 helical membrane passes run 282-310 and 325-342; these read IFFF…LAFT and PLYA…TYPP. Positions 349–360 form an intramembrane region, helical; that stretch reads ASRLSMREHLDT. Asn364 is a glycosylation site (N-linked (GlcNAc...) asparagine). The next 2 helical transmembrane spans lie at 400-420 and 421-440; these read GTLA…TTIP and MPAG…GRLL. Residue Phe426 coordinates chloride. The helical intramembrane region spans 464–496; sequence GGYALAGAAAFSGAVTHSISTALLAFELTGQIV. Residues 500 to 520 form a helical membrane-spanning segment; that stretch reads PVLMAVLAANAIAQSCQPSFY. At 521–678 the chain is on the cytoplasmic side; it reads DGTIMVKKLP…SWVERQHTGF (158 aa). CBS domains lie at 551–612 and 620–678; these read MRRA…ARAS and DILA…HTGF.

Belongs to the chloride channel (TC 2.A.49) family. CLCNKB subfamily. Homodimer. Interacts with BSND. N-glycosylated. Expressed predominantly in the kidney.

The protein resides in the basolateral cell membrane. It catalyses the reaction chloride(in) = chloride(out). The enzyme catalyses iodide(out) = iodide(in). The catalysed reaction is nitrate(in) = nitrate(out). It carries out the reaction bromide(in) = bromide(out). Its function is as follows. Anion-selective channel permeable to small monovalent anions with ion selectivity for chloride &gt; bromide &gt; nitrate &gt; iodide. Forms a homodimeric channel where each subunit has its own ion conduction pathway. May conduct double-barreled currents controlled by two types of gates, two fast gates that control each subunit independently and a slow common gate that opens and shuts off both subunits simultaneously. Assembles with the regulatory subunit BSND/Barttin for sorting at the basolateral plasma membrane domain and functional switch to the ion conducting state. CLCNKB:BSND channels display mostly a linear current-voltage relationship controlled by common gate. Mediates chloride conductance along nephron segments, namely the thick ascending limb of Henle's loop, convoluted tubule and the collecting duct, contributing to the maintenance of systemic acid-base and electrolyte homeostasis. Conducts chloride currents in the stria vascularis of the inner ear to establish the endocochlear potential necessary for normal hearing. This is Chloride channel protein ClC-Kb (CLCNKB) from Oryctolagus cuniculus (Rabbit).